The chain runs to 337 residues: Mycothiol acetyltransferase (337 aa).

N-acetyltransferase domains are found at residues 11-151 and 154-337; these read LDER…FELP and VRLR…MYRK. Glutamate 37 lines the 1D-myo-inositol 2-(L-cysteinylamino)-2-deoxy-alpha-D-glucopyranoside pocket. 81-83 contributes to the acetyl-CoA binding site; sequence LVI. 1D-myo-inositol 2-(L-cysteinylamino)-2-deoxy-alpha-D-glucopyranoside is bound at residue glutamate 182. Residues 210-246 form a disordered region; the sequence is RPTGSGDGDVADGGSTDGGPADSGSADGGAGEGGTGD. Positions 221–234 are enriched in low complexity; sequence DGGSTDGGPADSGS. Residues 235 to 246 show a composition bias toward gly residues; it reads ADGGAGEGGTGD. 1D-myo-inositol 2-(L-cysteinylamino)-2-deoxy-alpha-D-glucopyranoside is bound by residues lysine 257 and glutamate 271. Acetyl-CoA contacts are provided by residues 275–277 and 282–288; these read VGV and QGGGLGR. Tyrosine 309 provides a ligand contact to 1D-myo-inositol 2-(L-cysteinylamino)-2-deoxy-alpha-D-glucopyranoside. Residue 314 to 319 participates in acetyl-CoA binding; sequence NTAAIR.

Belongs to the acetyltransferase family. MshD subfamily. In terms of assembly, monomer.

The catalysed reaction is 1D-myo-inositol 2-(L-cysteinylamino)-2-deoxy-alpha-D-glucopyranoside + acetyl-CoA = mycothiol + CoA + H(+). In terms of biological role, catalyzes the transfer of acetyl from acetyl-CoA to desacetylmycothiol (Cys-GlcN-Ins) to form mycothiol. This Streptosporangium roseum (strain ATCC 12428 / DSM 43021 / JCM 3005 / KCTC 9067 / NCIMB 10171 / NRRL 2505 / NI 9100) protein is Mycothiol acetyltransferase.